The chain runs to 180 residues: Large ribosomal subunit protein uL5 (180 aa).

This sequence belongs to the universal ribosomal protein uL5 family. As to quaternary structure, part of the 50S ribosomal subunit; part of the 5S rRNA/L5/L18/L25 subcomplex. Contacts the 5S rRNA and the P site tRNA. Forms a bridge to the 30S subunit in the 70S ribosome.

This is one of the proteins that bind and probably mediate the attachment of the 5S RNA into the large ribosomal subunit, where it forms part of the central protuberance. In the 70S ribosome it contacts protein S13 of the 30S subunit (bridge B1b), connecting the 2 subunits; this bridge is implicated in subunit movement. Contacts the P site tRNA; the 5S rRNA and some of its associated proteins might help stabilize positioning of ribosome-bound tRNAs. The sequence is that of Large ribosomal subunit protein uL5 from Streptococcus uberis (strain ATCC BAA-854 / 0140J).